The primary structure comprises 252 residues: Imidazole glycerol phosphate synthase subunit HisF (252 aa).

Residues D11 and D130 contribute to the active site.

The protein belongs to the HisA/HisF family. Heterodimer of HisH and HisF.

Its subcellular location is the cytoplasm. The catalysed reaction is 5-[(5-phospho-1-deoxy-D-ribulos-1-ylimino)methylamino]-1-(5-phospho-beta-D-ribosyl)imidazole-4-carboxamide + L-glutamine = D-erythro-1-(imidazol-4-yl)glycerol 3-phosphate + 5-amino-1-(5-phospho-beta-D-ribosyl)imidazole-4-carboxamide + L-glutamate + H(+). The protein operates within amino-acid biosynthesis; L-histidine biosynthesis; L-histidine from 5-phospho-alpha-D-ribose 1-diphosphate: step 5/9. In terms of biological role, IGPS catalyzes the conversion of PRFAR and glutamine to IGP, AICAR and glutamate. The HisF subunit catalyzes the cyclization activity that produces IGP and AICAR from PRFAR using the ammonia provided by the HisH subunit. The chain is Imidazole glycerol phosphate synthase subunit HisF from Rhodospirillum rubrum (strain ATCC 11170 / ATH 1.1.1 / DSM 467 / LMG 4362 / NCIMB 8255 / S1).